The sequence spans 287 residues: Zinc transporter ZIP9 (287 aa).

The helical transmembrane segment at 4-24 (FLSISLLSLAMLVGCYVAGII) threads the bilayer. An N-linked (GlcNAc...) asparagine glycan is attached at Asn-29. Helical transmembrane passes span 35–55 (LKLV…AVIV), 107–127 (AYIG…DQIG), 147–167 (ITTT…LGAA), 177–197 (LIVF…LVSF), and 211–231 (HLLV…LGLS). N-linked (GlcNAc...) asparagine glycosylation is present at Asn-242. The helical transmembrane segment at 245-265 (GVAMLFSAGTFLYVATVHVLP) threads the bilayer. The disordered stretch occupies residues 268-287 (TSTNQSGSSLSPRPLPSGKN). Residue Asn-271 is glycosylated (N-linked (GlcNAc...) asparagine). The span at 273–287 (SGSSLSPRPLPSGKN) shows a compositional bias: low complexity.

Belongs to the ZIP transporter (TC 2.A.5) family.

Its subcellular location is the golgi apparatus. It is found in the trans-Golgi network membrane. The protein localises to the cell membrane. The protein resides in the cytoplasm. It localises to the perinuclear region. Its subcellular location is the mitochondrion. It is found in the nucleus. The catalysed reaction is Zn(2+)(in) = Zn(2+)(out). Functionally, transports zinc ions across cell and organelle membranes into the cytoplasm and regulates intracellular zinc homeostasis. Participates in the zinc ions efflux out of the secretory compartments. Regulates intracellular zinc level, resulting in the enhancement of AKT1 and MAPK3/MAPK1 (Erk1/2) phosphorylation in response to the BCR activation. Also functions as a membrane androgen receptor that mediates, through a G protein, the non-classical androgen signaling pathway, characterized by the activation of MAPK3/MAPK1 (Erk1/2) and transcription factors CREB1 or ATF1. This pathway contributes to CLDN1 and CLDN5 expression and tight junction formation between adjacent Sertoli cells. Mediates androgen-induced vascular endothelial cell proliferation through activation of an inhibitory G protein leading to the AKT1 and MAPK3/MAPK1 (Erk1/2) activation which in turn modulate inhibition (phosphorylation) of GSK3B and CCND1 transcription. Moreover, has dual functions as a membrane-bound androgen receptor and as an androgen-dependent zinc transporter both of which are mediated through an inhibitory G protein (Gi) that mediates both MAP kinase and zinc signaling leading to the androgen-dependent apoptotic process. This chain is Zinc transporter ZIP9, found in Rattus norvegicus (Rat).